The sequence spans 376 residues: Carbamoyl phosphate synthase small chain (376 aa).

Positions 1–187 (MKALLVLEDG…AEDGSYAWRG (187 aa)) are CPSase. 3 residues coordinate L-glutamine: Ser-45, Gly-239, and Gly-241. The 186-residue stretch at 191 to 376 (PLLVYDFGIK…RKIIGESAGA (186 aa)) folds into the Glutamine amidotransferase type-1 domain. Cys-266 acts as the Nucleophile in catalysis. L-glutamine is bound by residues Leu-267, Gln-270, Asn-308, Gly-310, and Phe-311. Active-site residues include His-349 and Glu-351.

This sequence belongs to the CarA family. Composed of two chains; the small (or glutamine) chain promotes the hydrolysis of glutamine to ammonia, which is used by the large (or ammonia) chain to synthesize carbamoyl phosphate. Tetramer of heterodimers (alpha,beta)4.

It catalyses the reaction hydrogencarbonate + L-glutamine + 2 ATP + H2O = carbamoyl phosphate + L-glutamate + 2 ADP + phosphate + 2 H(+). It carries out the reaction L-glutamine + H2O = L-glutamate + NH4(+). It participates in amino-acid biosynthesis; L-arginine biosynthesis; carbamoyl phosphate from bicarbonate: step 1/1. Its pathway is pyrimidine metabolism; UMP biosynthesis via de novo pathway; (S)-dihydroorotate from bicarbonate: step 1/3. In terms of biological role, small subunit of the glutamine-dependent carbamoyl phosphate synthetase (CPSase). CPSase catalyzes the formation of carbamoyl phosphate from the ammonia moiety of glutamine, carbonate, and phosphate donated by ATP, constituting the first step of 2 biosynthetic pathways, one leading to arginine and/or urea and the other to pyrimidine nucleotides. The small subunit (glutamine amidotransferase) binds and cleaves glutamine to supply the large subunit with the substrate ammonia. This is Carbamoyl phosphate synthase small chain from Desulfovibrio desulfuricans (strain ATCC 27774 / DSM 6949 / MB).